A 148-amino-acid polypeptide reads, in one-letter code: Single-stranded DNA-binding protein, mitochondrial (148 aa).

A mitochondrion-targeting transit peptide spans 1–16 (MFRRPVLQVLRQFVRH). Positions 30 to 141 (LNRVHLLGRV…IIADNIIFLS (112 aa)) constitute an SSB domain. Residues serine 67 and serine 79 each carry the phosphoserine modification. An N6-acetyllysine modification is found at lysine 113. Lysine 122 carries the N6-succinyllysine modification.

Homotetramer. Interacts with MPG/AAG, through inhibition of its glycosylase activity it potentially prevents formation of DNA breaks in ssDNA, ensuring that base removal primarily occurs in dsDNA. Interacts with POLDIP2. Interacts with PRIMPOL.

It localises to the mitochondrion. Its subcellular location is the mitochondrion matrix. The protein resides in the mitochondrion nucleoid. Functionally, binds preferentially and cooperatively to pyrimidine rich single-stranded DNA (ss-DNA). In vitro, required to maintain the copy number of mitochondrial DNA (mtDNA) and plays a crucial role during mtDNA replication by stimulating the activity of the replisome components POLG and TWNK at the replication fork. Promotes the activity of the gamma complex polymerase POLG, largely by organizing the template DNA and eliminating secondary structures to favor ss-DNA conformations that facilitate POLG activity. In addition it is able to promote the 5'-3' unwinding activity of the mtDNA helicase TWNK. May also function in mtDNA repair. This is Single-stranded DNA-binding protein, mitochondrial (SSBP1) from Pongo abelii (Sumatran orangutan).